A 1122-amino-acid polypeptide reads, in one-letter code: MEPSEVPSQISKDNFLEVPNLSDSLCEDEEVTFQPGFSPQPSRRGSDSSEDIYLDTPSSGTRRVSFADSFGFNLVSVKEFDCWELPSASTTFDLGTDIFHTEEYVLAPLFDLPSSKEDLMQQLQIQKAILESTESLLGSTSIKGIIRVLNVSFEKLVYVRMSLDDWQTHYDILAEYVPNSCDGETDQFSFKIVLVPPYQKDGSKVEFCIRYETSVGTFWSNNNGTNYTFICQKKEQEPEPVKPWKEVPNRQIKGCLKVKSSKEESSVTSEENNFENPKNTDTYIPTIICSHEDKEDLEASNRNVKDVNREHDEHNEKELELMINQHLIRTRSTASRDERNTFSTDPVNFPNKAEGLEKKQIHGEICTDLFQRSLSPSSSAESSVKGDFYCNEKYSSGDDCTHQPSEETTSNMGEIKPSLGDTSSDELVQLHTGSKEVLDDNANPAHGNGTVQIPCPSSDQLMAGNLNKKHEGGAKNIEVKDLGCLRRDFHSDTSACLKESTEEGSSKEDYYGNGKDDEEQRIYLGVNEKQRKNFQTILHDQERKMGNPKISVAGIGASNRDLATLLSEHTAIPTRAITADVSHSPRTNLSWEEAVLTPEHHHLTSEGSALGGITGQVCSSRTGNVLRNDYLFQVEEKSGGINSEDQDNSPQHKQSWNVLESQGKSRENKTNITEHIKGQTDCEDVWGKRDNTRSLKATTEELFTCQETVCCELSSLADHGITEKAEAGTAYIIKTTSESTPESMSAREKAIIAKLPQETARSDRPIEVKETAFDPHEGRNDDSHYTLCQRDTVGVIYDNDFEKESRLGICNVRVDEMEKEETMSMYNPRKTHDREKCGTGNITSVEESSWVITEYQKATSKLDLQLGMLPTDKTVFSENRDLRQVQELSKKTDSDAIVHSAFNSDTNRAPQNSSPFSKHHTEISVSTNEQAIAVENAVTTMASQPISTKSENICNSTREIQGIEKHPYPESKPEEVSRSSGIVTSGSRKERCIGQIFQTEEYSVEKSLGPMILINKPLENMEEARHENEGLVSSGQSLYTSGEKESDSSASTSLPVEESQAQGNESLFSKYTNSKIPYFLLFLIFLITVYHYDLMIGLTFYVLSLSWLSWEEGRQKESVKKK.

A disordered region spans residues 32–58 (TFQPGFSPQPSRRGSDSSEDIYLDTPS). Residues serine 38 and serine 42 each carry the phosphoserine; by GSK3 modification. Serine 46 bears the Phosphoserine; by PKA and ISPK mark. At serine 49 the chain carries Phosphoserine. Position 56 is a phosphothreonine (threonine 56). The PP1-binding motif motif lies at 62 to 65 (RRVS). At serine 65 the chain carries Phosphoserine; by PKA. The 109-residue stretch at 122 to 230 (QLQIQKAILE…NNNGTNYTFI (109 aa)) folds into the CBM21 domain. Disordered regions lie at residues 332–351 (STAS…NFPN), 395–422 (SSGD…LGDT), 496–516 (CLKE…NGKD), and 640–668 (GINS…SREN). 2 stretches are compositionally biased toward basic and acidic residues: residues 395-405 (SSGDDCTHQPS) and 499-516 (ESTE…NGKD). Positions 640-662 (GINSEDQDNSPQHKQSWNVLESQ) are enriched in polar residues. Phosphoserine is present on serine 844. The segment covering 963 to 977 (IEKHPYPESKPEEVS) has biased composition (basic and acidic residues). Disordered stretches follow at residues 963–983 (IEKH…SGIV) and 1025–1058 (RHEN…PVEE). Composition is skewed to polar residues over residues 1031 to 1040 (LVSSGQSLYT) and 1048 to 1058 (SSASTSLPVEE). Residues 1078 to 1098 (YFLLFLIFLITVYHYDLMIGL) form a helical membrane-spanning segment.

In terms of assembly, interacts with PPP1CC catalytic subunit of PP1, and associates with glycogen. In terms of processing, phosphorylation at Ser-46 by ISPK stimulates the dephosphorylation of glycogen synthase and phosphorylase kinase. As to expression, skeletal muscle and heart.

It localises to the membrane. Its function is as follows. Seems to act as a glycogen-targeting subunit for PP1. PP1 is essential for cell division, and participates in the regulation of glycogen metabolism, muscle contractility and protein synthesis. Plays an important role in glycogen synthesis but is not essential for insulin activation of glycogen synthase. The sequence is that of Protein phosphatase 1 regulatory subunit 3A (PPP1R3A) from Homo sapiens (Human).